Reading from the N-terminus, the 339-residue chain is Ketol-acid reductoisomerase (NADP(+)) (339 aa).

Positions 1–182 constitute a KARI N-terminal Rossmann domain; the sequence is MRVYYDRDAD…GGGRSGIIET (182 aa). NADP(+)-binding positions include 24-27, Lys48, Ser51, Thr53, and 83-86; these read YGSQ and DELQ. His108 is a catalytic residue. Gly134 contacts NADP(+). The KARI C-terminal knotted domain occupies 183 to 328; that stretch reads NFKEECETDL…AKLRGMMPWI (146 aa). Positions 191, 195, 227, and 231 each coordinate Mg(2+). Ser252 is a substrate binding site.

The protein belongs to the ketol-acid reductoisomerase family. The cofactor is Mg(2+).

The catalysed reaction is (2R)-2,3-dihydroxy-3-methylbutanoate + NADP(+) = (2S)-2-acetolactate + NADPH + H(+). It catalyses the reaction (2R,3R)-2,3-dihydroxy-3-methylpentanoate + NADP(+) = (S)-2-ethyl-2-hydroxy-3-oxobutanoate + NADPH + H(+). The protein operates within amino-acid biosynthesis; L-isoleucine biosynthesis; L-isoleucine from 2-oxobutanoate: step 2/4. Its pathway is amino-acid biosynthesis; L-valine biosynthesis; L-valine from pyruvate: step 2/4. In terms of biological role, involved in the biosynthesis of branched-chain amino acids (BCAA). Catalyzes an alkyl-migration followed by a ketol-acid reduction of (S)-2-acetolactate (S2AL) to yield (R)-2,3-dihydroxy-isovalerate. In the isomerase reaction, S2AL is rearranged via a Mg-dependent methyl migration to produce 3-hydroxy-3-methyl-2-ketobutyrate (HMKB). In the reductase reaction, this 2-ketoacid undergoes a metal-dependent reduction by NADPH to yield (R)-2,3-dihydroxy-isovalerate. The sequence is that of Ketol-acid reductoisomerase (NADP(+)) from Sinorhizobium medicae (strain WSM419) (Ensifer medicae).